The chain runs to 500 residues: L-arabinose isomerase (500 aa).

Mn(2+)-binding residues include Glu-306, Glu-333, His-350, and His-450.

The protein belongs to the arabinose isomerase family. Homohexamer. Requires Mn(2+) as cofactor.

It catalyses the reaction beta-L-arabinopyranose = L-ribulose. It participates in carbohydrate degradation; L-arabinose degradation via L-ribulose; D-xylulose 5-phosphate from L-arabinose (bacterial route): step 1/3. Its function is as follows. Catalyzes the conversion of L-arabinose to L-ribulose. This chain is L-arabinose isomerase, found in Yersinia pseudotuberculosis serotype O:3 (strain YPIII).